The following is a 60-amino-acid chain: Single-pass membrane and coiled-coil domain-containing protein 4 homolog (60 aa).

The interval 1-21 is disordered; it reads MRKLRGGQTKETRKQKQERRE. A compositionally biased stretch (basic and acidic residues) spans 8–21; sequence QTKETRKQKQERRE. The stretch at 10–33 forms a coiled coil; it reads KETRKQKQERREENLKIQQQLKTI. Residues 32 to 52 form a helical membrane-spanning segment; it reads TIVLPICGVFLMCIVVYVFLK.

The protein belongs to the SMCO4 family.

It is found in the membrane. The chain is Single-pass membrane and coiled-coil domain-containing protein 4 homolog from Aedes aegypti (Yellowfever mosquito).